The primary structure comprises 317 residues: 4-hydroxy-3-methylbut-2-enyl diphosphate reductase (317 aa).

Cysteine 12 contacts [4Fe-4S] cluster. The (2E)-4-hydroxy-3-methylbut-2-enyl diphosphate site is built by histidine 41 and histidine 74. 2 residues coordinate dimethylallyl diphosphate: histidine 41 and histidine 74. The isopentenyl diphosphate site is built by histidine 41 and histidine 74. Cysteine 96 is a [4Fe-4S] cluster binding site. Histidine 124 is a (2E)-4-hydroxy-3-methylbut-2-enyl diphosphate binding site. Histidine 124 contributes to the dimethylallyl diphosphate binding site. Residue histidine 124 participates in isopentenyl diphosphate binding. The active-site Proton donor is the glutamate 126. Threonine 168 provides a ligand contact to (2E)-4-hydroxy-3-methylbut-2-enyl diphosphate. Cysteine 198 lines the [4Fe-4S] cluster pocket. (2E)-4-hydroxy-3-methylbut-2-enyl diphosphate-binding residues include serine 226, serine 227, asparagine 228, and serine 270. 4 residues coordinate dimethylallyl diphosphate: serine 226, serine 227, asparagine 228, and serine 270. The isopentenyl diphosphate site is built by serine 226, serine 227, asparagine 228, and serine 270.

Belongs to the IspH family. The cofactor is [4Fe-4S] cluster.

The catalysed reaction is isopentenyl diphosphate + 2 oxidized [2Fe-2S]-[ferredoxin] + H2O = (2E)-4-hydroxy-3-methylbut-2-enyl diphosphate + 2 reduced [2Fe-2S]-[ferredoxin] + 2 H(+). The enzyme catalyses dimethylallyl diphosphate + 2 oxidized [2Fe-2S]-[ferredoxin] + H2O = (2E)-4-hydroxy-3-methylbut-2-enyl diphosphate + 2 reduced [2Fe-2S]-[ferredoxin] + 2 H(+). It participates in isoprenoid biosynthesis; dimethylallyl diphosphate biosynthesis; dimethylallyl diphosphate from (2E)-4-hydroxy-3-methylbutenyl diphosphate: step 1/1. It functions in the pathway isoprenoid biosynthesis; isopentenyl diphosphate biosynthesis via DXP pathway; isopentenyl diphosphate from 1-deoxy-D-xylulose 5-phosphate: step 6/6. Functionally, catalyzes the conversion of 1-hydroxy-2-methyl-2-(E)-butenyl 4-diphosphate (HMBPP) into a mixture of isopentenyl diphosphate (IPP) and dimethylallyl diphosphate (DMAPP). Acts in the terminal step of the DOXP/MEP pathway for isoprenoid precursor biosynthesis. This is 4-hydroxy-3-methylbut-2-enyl diphosphate reductase from Hahella chejuensis (strain KCTC 2396).